Consider the following 364-residue polypeptide: Phosphoserine aminotransferase (364 aa).

Arginine 46 is a binding site for L-glutamate. Pyridoxal 5'-phosphate contacts are provided by residues 80–81, tryptophan 106, threonine 157, aspartate 176, and glutamine 199; that span reads AR. Lysine 200 is subject to N6-(pyridoxal phosphate)lysine. Position 241–242 (241–242) interacts with pyridoxal 5'-phosphate; sequence NT.

The protein belongs to the class-V pyridoxal-phosphate-dependent aminotransferase family. SerC subfamily. As to quaternary structure, homodimer. Requires pyridoxal 5'-phosphate as cofactor.

The protein resides in the cytoplasm. It catalyses the reaction O-phospho-L-serine + 2-oxoglutarate = 3-phosphooxypyruvate + L-glutamate. It carries out the reaction 4-(phosphooxy)-L-threonine + 2-oxoglutarate = (R)-3-hydroxy-2-oxo-4-phosphooxybutanoate + L-glutamate. The protein operates within amino-acid biosynthesis; L-serine biosynthesis; L-serine from 3-phospho-D-glycerate: step 2/3. Its pathway is cofactor biosynthesis; pyridoxine 5'-phosphate biosynthesis; pyridoxine 5'-phosphate from D-erythrose 4-phosphate: step 3/5. In terms of biological role, catalyzes the reversible conversion of 3-phosphohydroxypyruvate to phosphoserine and of 3-hydroxy-2-oxo-4-phosphonooxybutanoate to phosphohydroxythreonine. This Vibrio vulnificus (strain YJ016) protein is Phosphoserine aminotransferase.